The sequence spans 828 residues: Translation initiation factor IF-2 (828 aa).

2 disordered regions span residues 48–76 (SYSGSTTTLSLNKEKGSLETGSSSGSEEF) and 112–148 (ASQEDPIEVEQEESSDTNKVKEEPKIEEVKDIEESTL). A compositionally biased stretch (polar residues) spans 49–58 (YSGSTTTLSL). The segment covering 65–74 (LETGSSSGSE) has biased composition (low complexity). The span at 116–126 (DPIEVEQEESS) shows a compositional bias: acidic residues. Over residues 127-144 (DTNKVKEEPKIEEVKDIE) the composition is skewed to basic and acidic residues. In terms of domain architecture, tr-type G spans 326–496 (SRAPVVTVMG…LLIAEMQNLK (171 aa)). A G1 region spans residues 335–342 (GHVDHGKT). 335 to 342 (GHVDHGKT) is a GTP binding site. Residues 360–364 (GITQH) form a G2 region. The interval 382-385 (DTPG) is G3. GTP-binding positions include 382–386 (DTPGH) and 436–439 (NKID). The segment at 436–439 (NKID) is G4. The segment at 472–474 (SAL) is G5.

This sequence belongs to the TRAFAC class translation factor GTPase superfamily. Classic translation factor GTPase family. IF-2 subfamily.

The protein localises to the cytoplasm. Functionally, one of the essential components for the initiation of protein synthesis. Protects formylmethionyl-tRNA from spontaneous hydrolysis and promotes its binding to the 30S ribosomal subunits. Also involved in the hydrolysis of GTP during the formation of the 70S ribosomal complex. The polypeptide is Translation initiation factor IF-2 (Rickettsia bellii (strain OSU 85-389)).